A 350-amino-acid polypeptide reads, in one-letter code: Protein memo-1 homolog (350 aa).

It belongs to the MEMO1 family. In terms of assembly, interacts with rho-1. Expressed in neuronal and non-neuronal cells in the head and tail, pharyngeal cells, spermatheca, distal tip cells, anchor cell and the intestine.

Plays a role in the oxidative stress response and the maintenance of longevity by regulating the interaction between GTPase rho-1 and oxidase bli-3. In turn, this serves to modulate bli-3 activity and the control of reactive oxygen species production. May control cell migration by relaying extracellular chemotactic signals to the microtubule cytoskeleton. The sequence is that of Protein memo-1 homolog from Caenorhabditis elegans.